A 264-amino-acid chain; its full sequence is Type 1 encapsulin shell protein (264 aa).

It belongs to the encapsulin family. Family 1 subfamily. Forms hollow shells composed of 60 subunits. Monomers probably form pentamers which assemble into the shell. There are 12 pores where the pentamers meet as well as 3-fold axis channels and dimer channels; none are larger than 3-4 Angstroms in diameter. The N-terminus of the protein is inside the shell, the C-terminus is outside.

It localises to the encapsulin nanocompartment. Functionally, shell component of a type 1 encapsulin nanocompartment. Assembles into proteinaceous shells 21-24 nm in diameter. Empty organelles can be expressed in E.coli. Cargo proteins (DypB) are targeted to the interior via their C-terminal extensions. This chain is Type 1 encapsulin shell protein, found in Rhodococcus erythropolis (strain PR4 / NBRC 100887).